The sequence spans 157 residues: Siroheme decarboxylase NirG subunit (157 aa).

Belongs to the Ahb/Nir family. Forms a complex composed of NirDL, NirG and NirH. All proteins are required for the total conversion of siroheme to didecarboxysiroheme.

The enzyme catalyses siroheme + 2 H(+) = 12,18-didecarboxysiroheme + 2 CO2. Its pathway is porphyrin-containing compound metabolism. In terms of biological role, involved in heme d1 biosynthesis. Catalyzes the decarboxylation of siroheme into didecarboxysiroheme. Siroheme is probably decarboxylated to monodecarboxysiroheme, which is in turn decarboxylated to didecarboxysiroheme. The polypeptide is Siroheme decarboxylase NirG subunit (Paracoccus pantotrophus (Thiosphaera pantotropha)).